Reading from the N-terminus, the 127-residue chain is Fluoride-specific ion channel FluC (127 aa).

4 helical membrane-spanning segments follow: residues 4-24 (LLLAVFIGGGTGSVARWLLSM), 35-55 (LGTLAANLIGAFIIGMGFAWF), 71-91 (TGFCGGLTTFSTFSAEVVFLL), and 103-123 (VFVNLLGSFAMTALAFWLFSA). Gly-75 and Thr-78 together coordinate Na(+).

It belongs to the fluoride channel Fluc/FEX (TC 1.A.43) family.

It is found in the cell inner membrane. It carries out the reaction fluoride(in) = fluoride(out). With respect to regulation, na(+) is not transported, but it plays an essential structural role and its presence is essential for fluoride channel function. Functionally, fluoride-specific ion channel. Important for reducing fluoride concentration in the cell, thus reducing its toxicity. This is Fluoride-specific ion channel FluC from Shigella flexneri serotype 5b (strain 8401).